Reading from the N-terminus, the 189-residue chain is MLERLKDSLIRSPIIKRGEYNYFIHPISDGVPSIDPHLVEEISDYISEIADMNVDTILTVEAMGIPVANALSLKTGIPLTIVRKRPYFLEGEVELSQSTGYSKGVLYINGLKKGDRIIIVDDVISTGGTLLALVRALQTIGVEVMDVISVIGRGDGYLKLRELGVEPKILVTIDVGEKGVEIKDVFGNQ.

This sequence belongs to the purine/pyrimidine phosphoribosyltransferase family. Archaeal HPRT subfamily. As to quaternary structure, homodimer.

It is found in the cytoplasm. It catalyses the reaction IMP + diphosphate = hypoxanthine + 5-phospho-alpha-D-ribose 1-diphosphate. The enzyme catalyses GMP + diphosphate = guanine + 5-phospho-alpha-D-ribose 1-diphosphate. It participates in purine metabolism; IMP biosynthesis via salvage pathway; IMP from hypoxanthine: step 1/1. Functionally, catalyzes a salvage reaction resulting in the formation of IMP that is energically less costly than de novo synthesis. This chain is Hypoxanthine/guanine phosphoribosyltransferase, found in Methanosarcina mazei (strain ATCC BAA-159 / DSM 3647 / Goe1 / Go1 / JCM 11833 / OCM 88) (Methanosarcina frisia).